The primary structure comprises 283 residues: Protein/nucleic acid deglycase HchA (283 aa).

Zn(2+)-binding residues include H86, E91, and H123. The active-site Nucleophile is the C185.

It belongs to the peptidase C56 family. HchA subfamily. In terms of assembly, homodimer.

The protein localises to the cytoplasm. The catalysed reaction is N(omega)-(1-hydroxy-2-oxopropyl)-L-arginyl-[protein] + H2O = lactate + L-arginyl-[protein] + H(+). The enzyme catalyses N(6)-(1-hydroxy-2-oxopropyl)-L-lysyl-[protein] + H2O = lactate + L-lysyl-[protein] + H(+). It catalyses the reaction S-(1-hydroxy-2-oxopropyl)-L-cysteinyl-[protein] + H2O = lactate + L-cysteinyl-[protein] + H(+). It carries out the reaction N(omega)-(1-hydroxy-2-oxoethyl)-L-arginyl-[protein] + H2O = L-arginyl-[protein] + glycolate + H(+). The catalysed reaction is N(6)-(1-hydroxy-2-oxoethyl)-L-lysyl-[protein] + H2O = glycolate + L-lysyl-[protein] + H(+). The enzyme catalyses S-(1-hydroxy-2-oxoethyl)-L-cysteinyl-[protein] + H2O = glycolate + L-cysteinyl-[protein] + H(+). It catalyses the reaction N(2)-(1-hydroxy-2-oxopropyl)-dGTP + H2O = lactate + dGTP + H(+). It carries out the reaction N(2)-(1-hydroxy-2-oxopropyl)-GTP + H2O = lactate + GTP + H(+). The catalysed reaction is N(2)-(1-hydroxy-2-oxopropyl)-GDP + H2O = lactate + GDP + H(+). The enzyme catalyses N(2)-(1-hydroxy-2-oxopropyl)-GMP + H2O = lactate + GMP + H(+). It catalyses the reaction N(2)-(1-hydroxy-2-oxoethyl)-dGTP + H2O = dGTP + glycolate + H(+). It carries out the reaction N(2)-(1-hydroxy-2-oxoethyl)-GTP + H2O = glycolate + GTP + H(+). The catalysed reaction is N(2)-(1-hydroxy-2-oxoethyl)-GDP + H2O = glycolate + GDP + H(+). The enzyme catalyses N(2)-(1-hydroxy-2-oxoethyl)-GMP + H2O = glycolate + GMP + H(+). It catalyses the reaction an N(2)-(1-hydroxy-2-oxopropyl)-guanosine in RNA + H2O = a guanosine in RNA + lactate + H(+). It carries out the reaction an N(2)-(1-hydroxy-2-oxopropyl)-2'-deoxyguanosine in DNA + H2O = a 2'-deoxyguanosine in DNA + lactate + H(+). The catalysed reaction is an N(2)-(1-hydroxy-2-oxoethyl)-guanosine in RNA + H2O = a guanosine in RNA + glycolate + H(+). The enzyme catalyses an N(2)-(1-hydroxy-2-oxoethyl)-2'-deoxyguanosine in DNA + H2O = a 2'-deoxyguanosine in DNA + glycolate + H(+). Protein and nucleotide deglycase that catalyzes the deglycation of the Maillard adducts formed between amino groups of proteins or nucleotides and reactive carbonyl groups of glyoxals. Thus, functions as a protein deglycase that repairs methylglyoxal- and glyoxal-glycated proteins, and releases repaired proteins and lactate or glycolate, respectively. Deglycates cysteine, arginine and lysine residues in proteins, and thus reactivates these proteins by reversing glycation by glyoxals. Acts on early glycation intermediates (hemithioacetals and aminocarbinols), preventing the formation of Schiff bases and advanced glycation endproducts (AGE). Also functions as a nucleotide deglycase able to repair glycated guanine in the free nucleotide pool (GTP, GDP, GMP, dGTP) and in DNA and RNA. Is thus involved in a major nucleotide repair system named guanine glycation repair (GG repair), dedicated to reversing methylglyoxal and glyoxal damage via nucleotide sanitization and direct nucleic acid repair. Plays an important role in protecting cells from carbonyl stress. The chain is Protein/nucleic acid deglycase HchA from Escherichia coli O139:H28 (strain E24377A / ETEC).